We begin with the raw amino-acid sequence, 427 residues long: Serine--tRNA ligase (427 aa).

231–233 (TAE) serves as a coordination point for L-serine. Residue 262-264 (RSE) participates in ATP binding. Glu285 serves as a coordination point for L-serine. Residue 349-352 (EISS) coordinates ATP. Residue Ser385 participates in L-serine binding.

This sequence belongs to the class-II aminoacyl-tRNA synthetase family. Type-1 seryl-tRNA synthetase subfamily. Homodimer. The tRNA molecule binds across the dimer.

It is found in the cytoplasm. It carries out the reaction tRNA(Ser) + L-serine + ATP = L-seryl-tRNA(Ser) + AMP + diphosphate + H(+). The catalysed reaction is tRNA(Sec) + L-serine + ATP = L-seryl-tRNA(Sec) + AMP + diphosphate + H(+). Its pathway is aminoacyl-tRNA biosynthesis; selenocysteinyl-tRNA(Sec) biosynthesis; L-seryl-tRNA(Sec) from L-serine and tRNA(Sec): step 1/1. Its function is as follows. Catalyzes the attachment of serine to tRNA(Ser). Is also able to aminoacylate tRNA(Sec) with serine, to form the misacylated tRNA L-seryl-tRNA(Sec), which will be further converted into selenocysteinyl-tRNA(Sec). The protein is Serine--tRNA ligase of Rhizobium johnstonii (strain DSM 114642 / LMG 32736 / 3841) (Rhizobium leguminosarum bv. viciae).